A 482-amino-acid polypeptide reads, in one-letter code: MADVRNPTKNHHGHHHLHALLIPYPFQGHVNPFVHLAIKLASQGITVTFVNTHYIHHQITNGSDGDIFAGVRSESGLDIRYATVSDGLPVGFDRSLNHDTYQSSLLHVFYAHVEELVASLVGGDGGVNVMIADTFFVWPSVVARKFGLVCVSFWTEAALVFSLYYHMDLLRIHGHFGAQETRSDLIDYIPGVAAINPKDTASYLQETDTSSVVHQIIFKAFEDVKKVDFVLCNTIQQFEDKTIKALNTKIPFYAIGPIIPFNNQTGSVTTSLWSESDCTQWLNTKPKSSVLYISFGSYAHVTKKDLVEIAHGILLSKVNFVWVVRPDIVSSDETNPLPEGFETEAGDRGIVIPWCCQMTVLSHESVGGFLTHCGWNSILETIWCEVPVLCFPLLTDQVTNRKLVVDDWEIGINLCEDKSDFGRDEVGRNINRLMCGVSKEKIGRVKMSLEGAVRNSGSSSEMNLGLFIDGLLSKVGLSNGKA.

UDP-alpha-D-glucose-binding positions include Ser297, 355-357 (CCQ), 372-380 (HCGWNSILE), and 394-397 (LTDQ).

It belongs to the UDP-glycosyltransferase family.

This Arabidopsis thaliana (Mouse-ear cress) protein is UDP-glycosyltransferase 86A2 (UGT86A2).